Consider the following 501-residue polypeptide: Glutathione gamma-glutamylcysteinyltransferase 1 (501 aa).

Positions Met-1 to Arg-221 constitute a Peptidase C83 domain. Catalysis depends on residues Cys-56, His-162, and Asp-180.

This sequence belongs to the phytochelatin synthase family. As to expression, expressed in roots, nodules and leaves.

The catalysed reaction is [Glu(-Cys)](n)-Gly + glutathione + H(+) = [Glu(-Cys)](n+1)-Gly + glycine. Its activity is regulated as follows. Requires cadmium for activity. Also activated in vitro by Zn(2+), Cu(2+), Fe(2+) or Fe(3+) ions, but not by Co(2+) or Ni(2+) ions. Its function is as follows. Involved in the synthesis of phytochelatins (PC) and homophytochelatins (hPC), the heavy-metal-binding peptides of plants. The protein is Glutathione gamma-glutamylcysteinyltransferase 1 (PCS1) of Lotus japonicus (Lotus corniculatus var. japonicus).